A 366-amino-acid polypeptide reads, in one-letter code: Protein-glutamate methylesterase/protein-glutamine glutaminase of group 2 operon (366 aa).

Positions 19–136 (RVLIVDDSAM…GQGLPAIMRD (118 aa)) constitute a Response regulatory domain. Residue Asp-70 is modified to 4-aspartylphosphate. Positions 162-356 (PGASEDWIHA…ARMMLAAAAD (195 aa)) constitute a CheB-type methylesterase domain. Active-site residues include Ser-175, His-201, and Asp-298.

The protein belongs to the CheB family. Phosphorylated by CheA. Phosphorylation of the N-terminal regulatory domain activates the methylesterase activity.

It localises to the cytoplasm. It carries out the reaction [protein]-L-glutamate 5-O-methyl ester + H2O = L-glutamyl-[protein] + methanol + H(+). The enzyme catalyses L-glutaminyl-[protein] + H2O = L-glutamyl-[protein] + NH4(+). Involved in chemotaxis. Part of a chemotaxis signal transduction system that modulates chemotaxis in response to various stimuli. Catalyzes the demethylation of specific methylglutamate residues introduced into the chemoreceptors (methyl-accepting chemotaxis proteins or MCP) by CheR. Also mediates the irreversible deamidation of specific glutamine residues to glutamic acid. This chain is Protein-glutamate methylesterase/protein-glutamine glutaminase of group 2 operon, found in Cereibacter sphaeroides (Rhodobacter sphaeroides).